The primary structure comprises 367 residues: Quinolinate synthase (367 aa).

Residues H45 and S62 each coordinate iminosuccinate. Residue C109 participates in [4Fe-4S] cluster binding. Iminosuccinate-binding positions include 140–142 (YVN) and S161. C229 contributes to the [4Fe-4S] cluster binding site. Residues 255 to 257 (HPE) and T272 contribute to the iminosuccinate site. C319 serves as a coordination point for [4Fe-4S] cluster.

This sequence belongs to the quinolinate synthase family. Type 3 subfamily. It depends on [4Fe-4S] cluster as a cofactor.

The protein localises to the cytoplasm. It carries out the reaction iminosuccinate + dihydroxyacetone phosphate = quinolinate + phosphate + 2 H2O + H(+). Its pathway is cofactor biosynthesis; NAD(+) biosynthesis; quinolinate from iminoaspartate: step 1/1. In terms of biological role, catalyzes the condensation of iminoaspartate with dihydroxyacetone phosphate to form quinolinate. This Halalkalibacterium halodurans (strain ATCC BAA-125 / DSM 18197 / FERM 7344 / JCM 9153 / C-125) (Bacillus halodurans) protein is Quinolinate synthase.